Here is a 692-residue protein sequence, read N- to C-terminus: Elongation factor G (692 aa).

Positions 8-282 (ENTRNIGIMA…AVIDYLPSPL (275 aa)) constitute a tr-type G domain. Residues 17-24 (AHIDAGKT), 81-85 (DTPGH), and 135-138 (NKMD) contribute to the GTP site.

The protein belongs to the TRAFAC class translation factor GTPase superfamily. Classic translation factor GTPase family. EF-G/EF-2 subfamily.

The protein localises to the cytoplasm. Catalyzes the GTP-dependent ribosomal translocation step during translation elongation. During this step, the ribosome changes from the pre-translocational (PRE) to the post-translocational (POST) state as the newly formed A-site-bound peptidyl-tRNA and P-site-bound deacylated tRNA move to the P and E sites, respectively. Catalyzes the coordinated movement of the two tRNA molecules, the mRNA and conformational changes in the ribosome. The polypeptide is Elongation factor G (Bacillus mycoides (strain KBAB4) (Bacillus weihenstephanensis)).